The primary structure comprises 288 residues: 11-beta-hydroxysteroid dehydrogenase 1 (288 aa).

The Cytoplasmic portion of the chain corresponds to 1–4; it reads MKKY. The helical; Signal-anchor for type II membrane protein transmembrane segment at 5–20 threads the bilayer; sequence LLPVLVLCLGYYYSTN. Topologically, residues 21-288 are lumenal; sequence EEFRPEMLQG…SYNRDLFVSN (268 aa). NADP(+) contacts are provided by residues 37–63, 88–89, and 115–117; these read GASK…TARS, TM, and NHI. Residue asparagine 158 is glycosylated (N-linked (GlcNAc...) asparagine). Substrate is bound at residue serine 166. Tyrosine 179 acts as the Proton acceptor in catalysis. 179-183 is a binding site for NADP(+); the sequence is YSASK. Asparagine 203 carries an N-linked (GlcNAc...) asparagine glycan. NADP(+)-binding positions include 212-218 and 214-218; these read GFIDTET and IDTET.

Belongs to the short-chain dehydrogenases/reductases (SDR) family. As to quaternary structure, homodimer. Glycosylated. In terms of tissue distribution, liver, kidney, lung and testis. Brain. Expressed in liver (at protein level).

The protein localises to the endoplasmic reticulum membrane. It carries out the reaction an 11beta-hydroxysteroid + NADP(+) = an 11-oxosteroid + NADPH + H(+). The catalysed reaction is corticosterone + NADP(+) = 11-dehydrocorticosterone + NADPH + H(+). The enzyme catalyses a 7beta-hydroxysteroid + NADP(+) = a 7-oxosteroid + NADPH + H(+). It catalyses the reaction 7-oxocholesterol + NADPH + H(+) = 7beta-hydroxycholesterol + NADP(+). It carries out the reaction chenodeoxycholate + NADP(+) = 7-oxolithocholate + NADPH + H(+). The catalysed reaction is 7-oxolithocholate + NADPH + H(+) = ursodeoxycholate + NADP(+). The enzyme catalyses glycochenodeoxycholate + NADP(+) = 7-oxoglycolithocholate + NADPH + H(+). It catalyses the reaction taurochenodeoxycholate + NADP(+) = 7-oxotaurolithocholate + NADPH + H(+). It carries out the reaction tauroursodeoxycholate + NADP(+) = 7-oxotaurolithocholate + NADPH + H(+). The catalysed reaction is glycoursodeoxycholate + NADP(+) = 7-oxoglycolithocholate + NADPH + H(+). The enzyme catalyses 7-oxopregnenolone + NADPH + H(+) = 7beta-hydroxypregnenolone + NADP(+). It catalyses the reaction 3beta,7alpha-dihydroxyandrost-5-en-17-one + NADP(+) = 3beta-hydroxy-5-androstene-7,17-dione + NADPH + H(+). It carries out the reaction 3beta-hydroxy-5-androstene-7,17-dione + NADPH + H(+) = 3beta,7beta-dihydroxyandrost-5-en-17-one + NADP(+). The catalysed reaction is 3beta-hydroxy-5alpha-androstane-7,17-dione + NADPH + H(+) = 3beta,7beta-dihydroxy-5alpha-androstan-17-one + NADP(+). Functionally, controls the reversible conversion of biologically active glucocorticoids such as 11-dehydrocorticosterone to corticosterone using NADP(H). Participates in the corticosteroid receptor-mediated anti-inflammatory response, as well as metabolic and homeostatic processes. Bidirectional in vitro, predominantly functions as a reductase in vivo, thereby increasing the concentration of active glucocorticoids. It has broad substrate specificity, besides glucocorticoids, it accepts other steroid and sterol substrates. Interconverts 7-oxo- and 7-hydroxy-neurosteroids such as 7-oxopregnenolone and 7beta-hydroxypregnenolone, 7-oxodehydroepiandrosterone (3beta-hydroxy-5-androstene-7,17-dione) and 7beta-hydroxydehydroepiandrosterone (3beta,7beta-dihydroxyandrost-5-en-17-one), among others. Catalyzes the stereo-specific conversion of the major dietary oxysterol, 7-ketocholesterol (7-oxocholesterol), into the more polar 7-beta-hydroxycholesterol metabolite. 7-oxocholesterol is one of the most important oxysterols, it participates in several events such as induction of apoptosis, accumulation in atherosclerotic lesions, lipid peroxidation, and induction of foam cell formation. Mediates the 7-oxo reduction of 7-oxolithocholate mainly to chenodeoxycholate, and to a lesser extent to ursodeoxycholate, both in its free form and when conjugated to glycine or taurine, providing a link between glucocorticoid activation and bile acid metabolism. Catalyzes the synthesis of 7-beta-25-dihydroxycholesterol from 7-oxo-25-hydroxycholesterol in vitro, which acts as a ligand for the G-protein-coupled receptor (GPCR) Epstein-Barr virus-induced gene 2 (EBI2) and may thereby regulate immune cell migration. The sequence is that of 11-beta-hydroxysteroid dehydrogenase 1 from Rattus norvegicus (Rat).